We begin with the raw amino-acid sequence, 428 residues long: Trigger factor (428 aa).

One can recognise a PPIase FKBP-type domain in the interval Gly-163–Pro-248.

It belongs to the FKBP-type PPIase family. Tig subfamily.

Its subcellular location is the cytoplasm. It carries out the reaction [protein]-peptidylproline (omega=180) = [protein]-peptidylproline (omega=0). Functionally, involved in protein export. Acts as a chaperone by maintaining the newly synthesized protein in an open conformation. Functions as a peptidyl-prolyl cis-trans isomerase. The protein is Trigger factor of Alkaliphilus oremlandii (strain OhILAs) (Clostridium oremlandii (strain OhILAs)).